Consider the following 543-residue polypeptide: Cytochrome P450 1B1 (543 aa).

Cys-470 is a binding site for heme.

The protein belongs to the cytochrome P450 family. Heme serves as cofactor. Expressed in heart, brain, lung, skeletal muscle, kidney, spleen, thymus, prostate, testis, ovary, small intestine, colon, and peripheral blood leukocytes. Expressed in retinal endothelial cells and umbilical vein endothelial cells (at protein level).

It localises to the endoplasmic reticulum membrane. The protein resides in the microsome membrane. The protein localises to the mitochondrion. The catalysed reaction is an organic molecule + reduced [NADPH--hemoprotein reductase] + O2 = an alcohol + oxidized [NADPH--hemoprotein reductase] + H2O + H(+). It catalyses the reaction 17beta-estradiol + reduced [NADPH--hemoprotein reductase] + O2 = 2-hydroxy-17beta-estradiol + oxidized [NADPH--hemoprotein reductase] + H2O + H(+). The enzyme catalyses 17beta-estradiol + reduced [NADPH--hemoprotein reductase] + O2 = 4-hydroxy-17beta-estradiol + oxidized [NADPH--hemoprotein reductase] + H2O + H(+). It carries out the reaction estrone + reduced [NADPH--hemoprotein reductase] + O2 = 2-hydroxyestrone + oxidized [NADPH--hemoprotein reductase] + H2O + H(+). The catalysed reaction is estrone + reduced [NADPH--hemoprotein reductase] + O2 = 4-hydroxyestrone + oxidized [NADPH--hemoprotein reductase] + H2O + H(+). It catalyses the reaction testosterone + reduced [NADPH--hemoprotein reductase] + O2 = 6beta,17beta-dihydroxyandrost-4-en-3-one + oxidized [NADPH--hemoprotein reductase] + H2O + H(+). The enzyme catalyses progesterone + reduced [NADPH--hemoprotein reductase] + O2 = 6beta-hydroxyprogesterone + oxidized [NADPH--hemoprotein reductase] + H2O + H(+). It carries out the reaction progesterone + reduced [NADPH--hemoprotein reductase] + O2 = 16alpha-hydroxyprogesterone + oxidized [NADPH--hemoprotein reductase] + H2O + H(+). The catalysed reaction is all-trans-retinol + reduced [NADPH--hemoprotein reductase] + O2 = all-trans-retinal + oxidized [NADPH--hemoprotein reductase] + 2 H2O + H(+). It catalyses the reaction all-trans-retinal + reduced [NADPH--hemoprotein reductase] + O2 = all-trans-retinoate + oxidized [NADPH--hemoprotein reductase] + H2O + 2 H(+). The enzyme catalyses (5Z,8Z,11Z,14Z)-eicosatetraenoate + reduced [NADPH--hemoprotein reductase] + O2 = (8R,9S)-epoxy-(5Z,11Z,14Z)-eicosatrienoate + oxidized [NADPH--hemoprotein reductase] + H2O + H(+). It carries out the reaction (5Z,8Z,11Z,14Z)-eicosatetraenoate + reduced [NADPH--hemoprotein reductase] + O2 = (11R,12S)-epoxy-(5Z,8Z,14Z)-eicosatrienoate + oxidized [NADPH--hemoprotein reductase] + H2O + H(+). The catalysed reaction is (5Z,8Z,11Z,14Z)-eicosatetraenoate + reduced [NADPH--hemoprotein reductase] + O2 = (11S,12R)-epoxy-(5Z,8Z,14Z)-eicosatrienoate + oxidized [NADPH--hemoprotein reductase] + H2O + H(+). It catalyses the reaction (5Z,8Z,11Z,14Z)-eicosatetraenoate + reduced [NADPH--hemoprotein reductase] + O2 = (14R,15S)-epoxy-(5Z,8Z,11Z)-eicosatrienoate + oxidized [NADPH--hemoprotein reductase] + H2O + H(+). The enzyme catalyses (5S)-hydroperoxy-(6E,8Z,11Z,14Z)-eicosatetraenoate = 5-oxo-(6E,8Z,11Z,14Z)-eicosatetraenoate + H2O. It carries out the reaction (12S)-hydroperoxy-(5Z,8Z,10E,14Z)-eicosatetraenoate = 12-oxo-(5Z,8Z,10E,14Z)-eicosatetraenoate + H2O. The catalysed reaction is (13S)-hydroperoxy-(9Z,11E)-octadecadienoate = 13-oxo-(9Z,11E)-octadecadienoate + H2O. It catalyses the reaction (15S)-hydroperoxy-(5Z,8Z,11Z,13E)-eicosatetraenoate = 15-oxo-(5Z,8Z,11Z,13E)-eicosatetraenoate + H2O. Its pathway is steroid hormone biosynthesis. The protein operates within cofactor metabolism; retinol metabolism. It participates in lipid metabolism; arachidonate metabolism. Enzyme activity is increased by liposomes containing anionic phospholipids, phosphatidic acid and cardiolipin. Inhibited by naringenin with an IC(50) of 5 uM. Enzyme activity is increased by cytochrome b5. Functionally, a cytochrome P450 monooxygenase involved in the metabolism of various endogenous substrates, including fatty acids, steroid hormones and vitamins. Mechanistically, uses molecular oxygen inserting one oxygen atom into a substrate, and reducing the second into a water molecule, with two electrons provided by NADPH via cytochrome P450 reductase (NADPH--hemoprotein reductase). Exhibits catalytic activity for the formation of hydroxyestrogens from estrone (E1) and 17beta-estradiol (E2), namely 2- and 4-hydroxy E1 and E2. Displays a predominant hydroxylase activity toward E2 at the C-4 position. Metabolizes testosterone and progesterone to B or D ring hydroxylated metabolites. May act as a major enzyme for all-trans retinoic acid biosynthesis in extrahepatic tissues. Catalyzes two successive oxidative transformation of all-trans retinol to all-trans retinal and then to the active form all-trans retinoic acid. Catalyzes the epoxidation of double bonds of certain PUFA. Converts arachidonic acid toward epoxyeicosatrienoic acid (EpETrE) regioisomers, 8,9-, 11,12-, and 14,15- EpETrE, that function as lipid mediators in the vascular system. Additionally, displays dehydratase activity toward oxygenated eicosanoids hydroperoxyeicosatetraenoates (HpETEs). This activity is independent of cytochrome P450 reductase, NADPH, and O2. Also involved in the oxidative metabolism of xenobiotics, particularly converting polycyclic aromatic hydrocarbons and heterocyclic aryl amines procarcinogens to DNA-damaging products. Plays an important role in retinal vascular development. Under hyperoxic O2 conditions, promotes retinal angiogenesis and capillary morphogenesis, likely by metabolizing the oxygenated products generated during the oxidative stress. Also, contributes to oxidative homeostasis and ultrastructural organization and function of trabecular meshwork tissue through modulation of POSTN expression. The sequence is that of Cytochrome P450 1B1 from Homo sapiens (Human).